We begin with the raw amino-acid sequence, 474 residues long: tRNA-2-methylthio-N(6)-dimethylallyladenosine synthase (474 aa).

The region spanning 3–120 (KKLHIKTWGC…LPEMINHVQE (118 aa)) is the MTTase N-terminal domain. C12, C49, C83, C157, C161, and C164 together coordinate [4Fe-4S] cluster. Positions 143–375 (RAEGPTAFVS…QQRISQQAME (233 aa)) constitute a Radical SAM core domain. The region spanning 378-441 (RKMVGTVQRV…ASSLRGILLR (64 aa)) is the TRAM domain.

Belongs to the methylthiotransferase family. MiaB subfamily. In terms of assembly, monomer. [4Fe-4S] cluster is required as a cofactor.

The protein localises to the cytoplasm. It catalyses the reaction N(6)-dimethylallyladenosine(37) in tRNA + (sulfur carrier)-SH + AH2 + 2 S-adenosyl-L-methionine = 2-methylsulfanyl-N(6)-dimethylallyladenosine(37) in tRNA + (sulfur carrier)-H + 5'-deoxyadenosine + L-methionine + A + S-adenosyl-L-homocysteine + 2 H(+). Its function is as follows. Catalyzes the methylthiolation of N6-(dimethylallyl)adenosine (i(6)A), leading to the formation of 2-methylthio-N6-(dimethylallyl)adenosine (ms(2)i(6)A) at position 37 in tRNAs that read codons beginning with uridine. The protein is tRNA-2-methylthio-N(6)-dimethylallyladenosine synthase of Yersinia pseudotuberculosis serotype O:3 (strain YPIII).